We begin with the raw amino-acid sequence, 316 residues long: tRNA dimethylallyltransferase (316 aa).

An ATP-binding site is contributed by 17 to 24; sequence GPTASGKT. A substrate-binding site is contributed by 19–24; sequence TASGKT. Interaction with substrate tRNA stretches follow at residues 42–45, 166–170, 247–252, and 280–287; these read DSAL, QRLSR, RCVGYR, and KRQITWLR.

The protein belongs to the IPP transferase family. As to quaternary structure, monomer. Mg(2+) is required as a cofactor.

It catalyses the reaction adenosine(37) in tRNA + dimethylallyl diphosphate = N(6)-dimethylallyladenosine(37) in tRNA + diphosphate. In terms of biological role, catalyzes the transfer of a dimethylallyl group onto the adenine at position 37 in tRNAs that read codons beginning with uridine, leading to the formation of N6-(dimethylallyl)adenosine (i(6)A). The chain is tRNA dimethylallyltransferase from Enterobacter sp. (strain 638).